We begin with the raw amino-acid sequence, 376 residues long: MSKRDFYEVLGVGRDASEREIKKAYKRLAMKFHPDRNPGNKEAEASFKEVKEAYEILTDGDKKAAYDQFGHAGVDPNRGGGGFGGGADFGDVFGDVFGDIFGGGRRGGQRQAARGSDLRYNLELSLEEAVRGLTKELRIPTLAACDACDGSGAKKGSSPTTCGTCHGQGQVQMRQGFFAVQQACPTCHGRGKIIKDPCNKCHGEGRVEKSKTLSVKIPAGVDTGDRIRLSGEGEAGEYGAPPGDLYVQVSVREHAIFQRDGNNLYCEVPISFSKAALGGEIEVPTLDGKVNLKIPAETQTGRMFRMRGKGVKSVRSHAVGDLLCKVVMETPVNLNERQKELLREFEDTLTGQSKKHSPKAEGFFDGVKKFFQDLNS.

Residues 5–70 (DFYEVLGVGR…DKKAAYDQFG (66 aa)) form the J domain. The CR-type zinc finger occupies 132 to 210 (GLTKELRIPT…CHGEGRVEKS (79 aa)). Cysteine 145, cysteine 148, cysteine 162, cysteine 165, cysteine 184, cysteine 187, cysteine 198, and cysteine 201 together coordinate Zn(2+). 4 CXXCXGXG motif repeats span residues 145-152 (CDACDGSG), 162-169 (CGTCHGQG), 184-191 (CPTCHGRG), and 198-205 (CNKCHGEG).

This sequence belongs to the DnaJ family. As to quaternary structure, homodimer. Zn(2+) is required as a cofactor.

The protein resides in the cytoplasm. Functionally, participates actively in the response to hyperosmotic and heat shock by preventing the aggregation of stress-denatured proteins and by disaggregating proteins, also in an autonomous, DnaK-independent fashion. Unfolded proteins bind initially to DnaJ; upon interaction with the DnaJ-bound protein, DnaK hydrolyzes its bound ATP, resulting in the formation of a stable complex. GrpE releases ADP from DnaK; ATP binding to DnaK triggers the release of the substrate protein, thus completing the reaction cycle. Several rounds of ATP-dependent interactions between DnaJ, DnaK and GrpE are required for fully efficient folding. Also involved, together with DnaK and GrpE, in the DNA replication of plasmids through activation of initiation proteins. This is Chaperone protein DnaJ from Shewanella halifaxensis (strain HAW-EB4).